The chain runs to 396 residues: Probable peptidoglycan glycosyltransferase FtsW (396 aa).

9 consecutive transmembrane segments (helical) span residues 17 to 37 (FCDGWLLVATLSLMLIGWVMV), 61 to 81 (VFVLCSMVVALLVLRIPMAWW), 83 to 103 (ANGPLLLLVGLALLALVLVAG), 117 to 137 (GIPLNLQASEIAKLCLIVYLA), 159 to 179 (MVMAVMGVLLIFEPDYGAVVV), 198 to 218 (FLLLMGLVAALGAALAIAEPY), 274 to 294 (FVFAVLAEELGMIGAVAVIGL), 316 to 336 (FAAYLCYGIALVIGAQAFINI), and 350 to 370 (LPLLSYGGSSLVISAVMVGML).

The protein belongs to the SEDS family. FtsW subfamily.

The protein localises to the cell inner membrane. The enzyme catalyses [GlcNAc-(1-&gt;4)-Mur2Ac(oyl-L-Ala-gamma-D-Glu-L-Lys-D-Ala-D-Ala)](n)-di-trans,octa-cis-undecaprenyl diphosphate + beta-D-GlcNAc-(1-&gt;4)-Mur2Ac(oyl-L-Ala-gamma-D-Glu-L-Lys-D-Ala-D-Ala)-di-trans,octa-cis-undecaprenyl diphosphate = [GlcNAc-(1-&gt;4)-Mur2Ac(oyl-L-Ala-gamma-D-Glu-L-Lys-D-Ala-D-Ala)](n+1)-di-trans,octa-cis-undecaprenyl diphosphate + di-trans,octa-cis-undecaprenyl diphosphate + H(+). It functions in the pathway cell wall biogenesis; peptidoglycan biosynthesis. Functionally, peptidoglycan polymerase that is essential for cell division. The sequence is that of Probable peptidoglycan glycosyltransferase FtsW from Halomonas elongata (strain ATCC 33173 / DSM 2581 / NBRC 15536 / NCIMB 2198 / 1H9).